Reading from the N-terminus, the 800-residue chain is Nucleolar complex protein 3 homolog (800 aa).

Disordered stretches follow at residues 27 to 93 and 160 to 187; these read KLKN…DMMD and GIIPQTREKPVTDSNKDEEDQEEERELE. Positions 40–51 are enriched in basic residues; sequence KKYRKEQRKLRQ. The span at 66–78 shows a compositional bias: basic and acidic residues; that stretch reads NPKEKRPGKRIER. Residues 79 to 93 show a composition bias toward acidic residues; that stretch reads EEEEEEEALPLDMMD. The segment covering 160–174 has biased composition (basic and acidic residues); the sequence is GIIPQTREKPVTDSN. Residues 175-187 show a composition bias toward acidic residues; that stretch reads KDEEDQEEERELE. Residue Lys333 forms a Glycyl lysine isopeptide (Lys-Gly) (interchain with G-Cter in SUMO2) linkage. A coiled-coil region spans residues 451–490; the sequence is KEKRKSLSRMQRKWKKAEEKLERELREAEASESTEKKLKL. The residue at position 787 (Ser787) is a Phosphoserine.

This sequence belongs to the CBF/MAK21 family. Expressed in colon, heart, kidney, liver, lung, placenta, skeletal muscle, small intestine, spleen and thymus.

The protein resides in the nucleus. It localises to the nucleolus. Its subcellular location is the nucleus speckle. May be required for adipogenesis. This chain is Nucleolar complex protein 3 homolog (NOC3L), found in Homo sapiens (Human).